A 336-amino-acid polypeptide reads, in one-letter code: tRNA N6-adenosine threonylcarbamoyltransferase (336 aa).

2 residues coordinate Fe cation: His-111 and His-115. Substrate-binding positions include 134–138 (VVSGG), Asp-167, Gly-180, Asp-184, and Asn-272. Asp-300 contributes to the Fe cation binding site.

The protein belongs to the KAE1 / TsaD family. It depends on Fe(2+) as a cofactor.

It localises to the cytoplasm. It catalyses the reaction L-threonylcarbamoyladenylate + adenosine(37) in tRNA = N(6)-L-threonylcarbamoyladenosine(37) in tRNA + AMP + H(+). In terms of biological role, required for the formation of a threonylcarbamoyl group on adenosine at position 37 (t(6)A37) in tRNAs that read codons beginning with adenine. Is involved in the transfer of the threonylcarbamoyl moiety of threonylcarbamoyl-AMP (TC-AMP) to the N6 group of A37, together with TsaE and TsaB. TsaD likely plays a direct catalytic role in this reaction. This is tRNA N6-adenosine threonylcarbamoyltransferase from Caldicellulosiruptor saccharolyticus (strain ATCC 43494 / DSM 8903 / Tp8T 6331).